We begin with the raw amino-acid sequence, 448 residues long: Probable glycine dehydrogenase (decarboxylating) subunit 1 (448 aa).

This sequence belongs to the GcvP family. N-terminal subunit subfamily. The glycine cleavage system is composed of four proteins: P, T, L and H. In this organism, the P 'protein' is a heterodimer of two subunits.

The catalysed reaction is N(6)-[(R)-lipoyl]-L-lysyl-[glycine-cleavage complex H protein] + glycine + H(+) = N(6)-[(R)-S(8)-aminomethyldihydrolipoyl]-L-lysyl-[glycine-cleavage complex H protein] + CO2. Functionally, the glycine cleavage system catalyzes the degradation of glycine. The P protein binds the alpha-amino group of glycine through its pyridoxal phosphate cofactor; CO(2) is released and the remaining methylamine moiety is then transferred to the lipoamide cofactor of the H protein. The protein is Probable glycine dehydrogenase (decarboxylating) subunit 1 of Listeria innocua serovar 6a (strain ATCC BAA-680 / CLIP 11262).